A 104-amino-acid chain; its full sequence is Type VII secretion system extracellular protein B (104 aa).

It belongs to the WXG100 family. In terms of assembly, homodimer. When mixed with EsxA does not form heterodimers.

It localises to the secreted. In terms of biological role, virulence factor that is important for the establishment of infection in the host. EsxB is required for EsxA synthesis as well as secretion. Mediates together with EsxA the release of S.aureus from the host cell. Also inhibits host cytokine production and thus modulates dendritic cell-mediated immunity. The protein is Type VII secretion system extracellular protein B of Staphylococcus aureus (strain MSSA476).